The chain runs to 451 residues: UDP-N-acetylmuramoylalanine--D-glutamate ligase (451 aa).

120-126 (GSNGKTT) lines the ATP pocket.

It belongs to the MurCDEF family.

The protein localises to the cytoplasm. The enzyme catalyses UDP-N-acetyl-alpha-D-muramoyl-L-alanine + D-glutamate + ATP = UDP-N-acetyl-alpha-D-muramoyl-L-alanyl-D-glutamate + ADP + phosphate + H(+). It functions in the pathway cell wall biogenesis; peptidoglycan biosynthesis. In terms of biological role, cell wall formation. Catalyzes the addition of glutamate to the nucleotide precursor UDP-N-acetylmuramoyl-L-alanine (UMA). This is UDP-N-acetylmuramoylalanine--D-glutamate ligase from Bacillus velezensis (strain DSM 23117 / BGSC 10A6 / LMG 26770 / FZB42) (Bacillus amyloliquefaciens subsp. plantarum).